Here is a 154-residue protein sequence, read N- to C-terminus: D-aminoacyl-tRNA deacylase (154 aa).

Positions 142 to 143 (GP) match the Gly-cisPro motif, important for rejection of L-amino acids motif.

This sequence belongs to the DTD family. As to quaternary structure, homodimer.

It is found in the cytoplasm. The enzyme catalyses glycyl-tRNA(Ala) + H2O = tRNA(Ala) + glycine + H(+). It carries out the reaction a D-aminoacyl-tRNA + H2O = a tRNA + a D-alpha-amino acid + H(+). Its function is as follows. An aminoacyl-tRNA editing enzyme that deacylates mischarged D-aminoacyl-tRNAs. Also deacylates mischarged glycyl-tRNA(Ala), protecting cells against glycine mischarging by AlaRS. Acts via tRNA-based rather than protein-based catalysis; rejects L-amino acids rather than detecting D-amino acids in the active site. By recycling D-aminoacyl-tRNA to D-amino acids and free tRNA molecules, this enzyme counteracts the toxicity associated with the formation of D-aminoacyl-tRNA entities in vivo and helps enforce protein L-homochirality. In Polaromonas naphthalenivorans (strain CJ2), this protein is D-aminoacyl-tRNA deacylase.